The chain runs to 175 residues: RNA pyrophosphohydrolase (175 aa).

The Nudix hydrolase domain occupies 7–150 (GYRLNVGIIL…KRQVYIQALK (144 aa)). The Nudix box signature appears at 39-60 (GGLAPGETAMQAMYRELHEEVG).

This sequence belongs to the Nudix hydrolase family. RppH subfamily. A divalent metal cation serves as cofactor.

Functionally, accelerates the degradation of transcripts by removing pyrophosphate from the 5'-end of triphosphorylated RNA, leading to a more labile monophosphorylated state that can stimulate subsequent ribonuclease cleavage. This is RNA pyrophosphohydrolase from Legionella pneumophila (strain Paris).